We begin with the raw amino-acid sequence, 364 residues long: Protein Bop (364 aa).

The disordered stretch occupies residues S66–S88. Positions L114–H128 match the BH3 motif. The segment at Q258–F364 is disordered. 2 stretches are compositionally biased toward pro residues: residues A311–P322 and P355–F364.

In terms of assembly, interacts (via BH3 domain) with VDAC1. Interacts with pro-survival Bcl-2 family members, BCL2, BCL2L1 isoform Bcl-X(L), MCL1, BCL2A1 and BCL2L2. Interacts with BAX and BAK1. Ubiquitously expressed.

It localises to the mitochondrion. In terms of biological role, could induce apoptosis in a BH3 domain-dependent manner. The direct interaction network of Bcl-2 family members may play a key role in modulation RTL10/BOP intrinsic apoptotic signaling activity. This Homo sapiens (Human) protein is Protein Bop.